A 1288-amino-acid polypeptide reads, in one-letter code: Probable serine/threonine-protein kinase drkD (1288 aa).

A compositionally biased stretch (polar residues) spans 1 to 12 (MEGSFQFNKSKQ). Disordered regions lie at residues 1 to 132 (MEGS…QYHP), 156 to 223 (FNVS…PEEI), and 269 to 386 (SFGH…DDEE). Low complexity-rich tracts occupy residues 13–79 (TNNN…NSTS) and 156–220 (FNVS…QQQP). Positions 221–248 (EEIEGELNRERQERDKMLHEEAEIEQYK) form a coiled coil. A compositionally biased stretch (polar residues) spans 271–291 (GHITSANSDETTNNESGSPIN). The segment covering 302 to 343 (PHSSHNEDHQSDQDNHGQFMNDEHQSTDDDQNKSDNEKESES) has biased composition (basic and acidic residues). Residues 344 to 354 (ARNSGDLQQKV) are compositionally biased toward polar residues. Positions 376–386 (EGEEEDDDDEE) are enriched in acidic residues. 7 LRR repeats span residues 400–421 (KSTKLSLSNCWLKVIPTDVWSI), 423–444 (ELRDLDLSANQLKKVSKSIGLL), 446–468 (HLKRLRLNHNQLTALPKELYSLP), 469–490 (RLTTLYLNNNNFKVVPKEINRL), 492–513 (SLKTLDLSFNQITDISPQTNLH), 517–538 (NLVELRLRYNQLSSLPQNMLES), and 540–561 (HLQVLWLEGNRLPLNKAILKKS). Disordered regions lie at residues 690 to 717 (WDQQQQQQQQQSPNVSTPPISTSPVLTG), 733 to 764 (PTQQINNPPSPVTQFNQASPQHNNNQQQQQQQ), and 796 to 825 (QQQQQQNGSPQQPHVNNNNNNNIQQNKDHQ). Polar residues-rich tracts occupy residues 701–717 (SPNVSTPPISTSPVLTG) and 733–757 (PTQQINNPPSPVTQFNQASPQHNNN). One can recognise a Protein kinase domain in the interval 851-1104 (IAIGARIGRG…EILPIMEGMI (254 aa)). Residues 857–865 (IGRGGYGQV) and Lys878 contribute to the ATP site. The active-site Proton acceptor is the Asp974. Disordered stretches follow at residues 1118–1141 (GRPIPYVGPPEKDPSNKQPPQNMA) and 1245–1288 (QQQL…NDKK). Residues 1257 to 1268 (NRLNYNFNNSNN) are compositionally biased toward low complexity. Over residues 1269–1282 (SDIQPMQQENNYRM) the composition is skewed to polar residues.

The protein belongs to the protein kinase superfamily. TKL Ser/Thr protein kinase family.

It carries out the reaction L-seryl-[protein] + ATP = O-phospho-L-seryl-[protein] + ADP + H(+). It catalyses the reaction L-threonyl-[protein] + ATP = O-phospho-L-threonyl-[protein] + ADP + H(+). In Dictyostelium discoideum (Social amoeba), this protein is Probable serine/threonine-protein kinase drkD (drkD).